The primary structure comprises 1335 residues: MTVSDAPTPHIHLPDGSCCQPKKFAHLHQHTQYSLLDGAAKLKDLLKWAKEVTPEGQTPALAMTDHGNMHGAVHFYNYAMGMEVKPIIGYEAYVVPGFGTRRDRSRAQDGEKGIFHLTLLARDFEGYQNLCRLSSRGYTEGYYYKPRIDHELLQEHHKGIIAFSGCLGSEVQQLLMQGREDDARARLLWYRELFGDNYFIEIQDHGLPEQKKNNPILKAWAQELGIGMVATNDGHYVKKSDATAHETLLAIQTKATLADENRFKFPCDEFYVKNLEEMQRALPVSEWGEEPFDNTAHIAELCNVELPVGKKRQYQMPQLPIPEGRSMAEELRVQTYAGAVKRYPAHLTEGLLRDYAARSLAELGEADAARVLKRTGGCDSASCDLDTLYTLLAFLGSEWEARGKEAGEKYTPYPALEKMEQDGESGTLPAYAHADCRAARRQDSDTSIELDPDTDDEETTRSHHRYALKLLRRAEYELSVINNMGFPDYFLIVADYINWAKDHDISVGPGRGSGAGSLVAYAIRITNLDPLEFELLFERFLNPDRISMPDFDIDFNDARRTEVIGYVQEKYGTDKVAQIATFGTMASKACLKDVARVMGLEYAKVDKVSKLIPIKFGKSYSLEQAREAVPDIQQMLAEDAQLLEAYEFAQKLEGLTRHASVHAAGVVIGREELTNLVPVMRDTSGEGQVCQYDMKSVEDIGLIKMDFLGLRTLSFLDEAKRILRESGTDFEEKYGDFDHIPFDDEKTYELMSRGDTKGVFQLEGAGIADASRRLKPRRLADIIALSALYRPGPMENIPTYVRRHHGIEEVDYDKDGFPNSKQWLEKILQETYGIPVYQEQIMQIASEVAGYSLGGADLLRRAMGKKDAEEMKRQRQLFVVGAKEKGVPEDEGNKLFDMLDAFANYGFNKSHSAAYGVITYQTAWLKANYPVQFMAALLTVERRDSDKVAEYVSDARKMDLHVLPPDINRSSSDFAVAGEEILFGLYAIKGLGESAVLRILEEREKAGAFKSLADFCSRLGNKVCNRKALESLIKSGAFDAFGERHQLIESLEDALEDAAGTAEINARAQSGMSMMFGMEEVKKERPLRSSIAPYSDLERLAIEKEALGLYISGHPLEQHEGLREAASCRVSDLDAWFALQNVAPGKRQKAVLAGMIEGVVKKPTKSGGMMARFILADESGQMELVAFSRAYDRIEPKLVNDTPALVIVELEAEDGGLRAIAEEIVSIEQLSEVPKVMYVTIDLETASPDALGDFQSVLDEYAGSMPTYLRLETPEQFVVYQLDHGMGSPEAIRALNQTFAWADAHLAYDQQTILGRFAPKPPAWMNRQQGGGMRA.

Residues 442-461 (QDSDTSIELDPDTDDEETTR) form a disordered region. Positions 446–458 (TSIELDPDTDDEE) are enriched in acidic residues.

This sequence belongs to the DNA polymerase type-C family. DnaE subfamily. As to quaternary structure, DNA polymerase III contains a core (composed of alpha, epsilon and theta chains) that associates with a tau subunit. This core dimerizes to form the PolIII' complex. PolIII' associates with the gamma complex (composed of gamma, delta, delta', psi and chi chains) and with the beta chain to form the complete DNA polymerase III complex.

The protein resides in the cytoplasm. The catalysed reaction is DNA(n) + a 2'-deoxyribonucleoside 5'-triphosphate = DNA(n+1) + diphosphate. Functionally, DNA polymerase III is a complex, multichain enzyme responsible for most of the replicative DNA synthesis in bacteria as well as the bulk of DNA synthesis/repair after ionizing radiation (IR). The alpha chain is the catalytic subunit. Following severe irradiation (7 kGy of gamma irradiation) genomic DNA is fragmented. DNA is progressively degraded for the first 1.5 hours after IR, in a step promoted by RecA and counterbalanced by DNA Pol I and Pol III, followed by massive DNA synthesis and genome reassembly in the next hour. Optimal priming of DNA synthesis requires both RecA and RadA, Pol III initiates DNA synthesis while both Pol I and Pol III are required for its continuation. This DNA polymerase also exhibits 3' to 5' exonuclease activity. The sequence is that of DNA polymerase III subunit alpha (dnaE) from Deinococcus radiodurans (strain ATCC 13939 / DSM 20539 / JCM 16871 / CCUG 27074 / LMG 4051 / NBRC 15346 / NCIMB 9279 / VKM B-1422 / R1).